Reading from the N-terminus, the 108-residue chain is MKKLILIAIMASGLVACAQSTAPQEDSRLKEAYSACINTAQGSPEKIEACQSVLNVLKKEKQHQQFADQESVRVLDYQQCLRATQTGNDQAVKADCDKVWQEIRSNNK.

An N-terminal signal peptide occupies residues 1-16 (MKKLILIAIMASGLVA). C17 carries N-palmitoyl cysteine lipidation. Residue C17 is the site of S-diacylglycerol cysteine attachment.

It localises to the cell membrane. This is an uncharacterized protein from Escherichia coli (strain K12).